Consider the following 274-residue polypeptide: Large ribosomal subunit protein uL2cz/uL2cy (274 aa).

2 disordered regions span residues 1–21 (MAIHLYKTSTPGTRNGAVDSQ) and 224–274 (NPVD…RRSK).

Belongs to the universal ribosomal protein uL2 family. Part of the 50S ribosomal subunit.

The protein localises to the plastid. It localises to the chloroplast. The sequence is that of Large ribosomal subunit protein uL2cz/uL2cy (rpl2-A) from Gossypium hirsutum (Upland cotton).